A 467-amino-acid chain; its full sequence is Probable amino acid permease 7 (467 aa).

Topologically, residues Met1 to Thr29 are cytoplasmic. A helical membrane pass occupies residues Leu30–Ala50. Residues Trp51–Trp58 lie on the Extracellular side of the membrane. The helical transmembrane segment at Ile59 to Leu79 threads the bilayer. Residues Ser80–Glu111 lie on the Cytoplasmic side of the membrane. Residues Ile112–Val132 form a helical membrane-spanning segment. Topologically, residues Ile133–Tyr163 are extracellular. 2 helical membrane-spanning segments follow: residues Phe164–Met184 and Val185–Leu205. The Extracellular segment spans residues Ala206 to Lys231. The helical transmembrane segment at Val232–Leu252 threads the bilayer. At Leu253 to Thr274 the chain is on the cytoplasmic side. Residues Val275–Phe295 form a helical membrane-spanning segment. Over Gly296–Pro312 the chain is Extracellular. The chain crosses the membrane as a helical span at residues Phe313–Val333. The Cytoplasmic segment spans residues Tyr334–Thr383. 2 helical membrane-spanning segments follow: residues Met384 to Gly404 and Val405 to Leu425. Residues Gln426–Ser443 are Cytoplasmic-facing. A helical transmembrane segment spans residues Phe444 to Ala464. Residues Lys465–Gly467 are Extracellular-facing.

Belongs to the amino acid/polyamine transporter 2 family. Amino acid/auxin permease (AAAP) (TC 2.A.18.2) subfamily.

It is found in the cell membrane. Amino acid-proton symporter. Stereospecific transporter with a broad specificity for neutral amino acids. The sequence is that of Probable amino acid permease 7 (AAP7) from Arabidopsis thaliana (Mouse-ear cress).